Consider the following 161-residue polypeptide: Large ribosomal subunit protein uL10 (161 aa).

The protein belongs to the universal ribosomal protein uL10 family. As to quaternary structure, part of the ribosomal stalk of the 50S ribosomal subunit. The N-terminus interacts with L11 and the large rRNA to form the base of the stalk. The C-terminus forms an elongated spine to which L12 dimers bind in a sequential fashion forming a multimeric L10(L12)X complex.

Functionally, forms part of the ribosomal stalk, playing a central role in the interaction of the ribosome with GTP-bound translation factors. This chain is Large ribosomal subunit protein uL10 (rplJ), found in Mycoplasma pneumoniae (strain ATCC 29342 / M129 / Subtype 1) (Mycoplasmoides pneumoniae).